The primary structure comprises 603 residues: MTNVPISRLRNFCIIAHIDHGKSTLADRLLQDTGTVSSRDMQEQFLDNMDLERERGITIKLQAARMNYKADDGEEYVLNLIDTPGHVDFSYEVSRSLQACEGALLVVDASQGVEAQTLANVYLALENDLEIIPVLNKVDLPGADPEKIKNEIESIIGLDTSKAISCSAKTGVGIPEILQAVVDRIPSPKDNTDQATKALIFDSYYDPYRGVIVYFRIMSGGISKKDKVLLMSSKKSYELDEIGVMAPDQVKVNSLHAGEVGYLAASIKAVADARVGDTITLVDRPAEDALPGYAEAKPMVFCGLFPTDADQYPDLRDALDKLQLSDAALKYEPETSSAMGFGFRCGFLGLLHMEIVQERLEREYDLDLIVTAPSVIYKVKMIDGEVKMIDNPATLPDPQKRETIEEPYVRMEIYAPNDYNGTLMGLCQDRRGDFIDMKYITTDRVTLIYEIPLAEVVTDFFDQMKSRTKGYASMEYHLIGYRENDLVRLDVLINSERADPLTTIVHKDNAYGVGKGLVEKLKELIPKQQFKIPLQASIGSRIIASEGISALRKDVLSKCYGGDISRKKKLLKKQAKGKKRMKSMGKVDVPQEAFMAVLKLNND.

Residues 7–189 (SRLRNFCIIA…AVVDRIPSPK (183 aa)) enclose the tr-type G domain. Residues 19 to 24 (DHGKST) and 136 to 139 (NKVD) contribute to the GTP site.

It belongs to the TRAFAC class translation factor GTPase superfamily. Classic translation factor GTPase family. LepA subfamily.

Its subcellular location is the cell inner membrane. It carries out the reaction GTP + H2O = GDP + phosphate + H(+). Functionally, required for accurate and efficient protein synthesis under certain stress conditions. May act as a fidelity factor of the translation reaction, by catalyzing a one-codon backward translocation of tRNAs on improperly translocated ribosomes. Back-translocation proceeds from a post-translocation (POST) complex to a pre-translocation (PRE) complex, thus giving elongation factor G a second chance to translocate the tRNAs correctly. Binds to ribosomes in a GTP-dependent manner. This Prochlorococcus marinus (strain NATL1A) protein is Elongation factor 4.